The primary structure comprises 631 residues: Dolichyl-diphosphooligosaccharide--protein glycosyltransferase subunit 2 (631 aa).

The N-terminal stretch at 1–22 (MAPPGSSTVFLLALTIIASTWA) is a signal peptide. Over 23 to 540 (LTPTHYLTKH…REPEKRPPTV (518 aa)) the chain is Lumenal. Residue N106 is glycosylated (N-linked (GlcNAc...) asparagine). K154 participates in a covalent cross-link: Glycyl lysine isopeptide (Lys-Gly) (interchain with G-Cter in ubiquitin). A helical transmembrane segment spans residues 541–561 (VSNTFTALILSPLLLLFALWI). The Cytoplasmic segment spans residues 562–571 (RIGANVSNFT). The chain crosses the membrane as a helical span at residues 572–592 (FAPSTIIFHLGHAAMLGLMYV). The Lumenal segment spans residues 593-596 (YWTQ). The helical transmembrane segment at 597–617 (LNMFQTLKYLAILGSVTFLAG) threads the bilayer. Over 618–631 (NRMLAQQAVKRTAH) the chain is Cytoplasmic.

It belongs to the SWP1 family. In terms of assembly, component of the oligosaccharyltransferase (OST) complex. OST exists in two different complex forms which contain common core subunits RPN1, RPN2, OST48, OST4, DAD1 and TMEM258, either STT3A or STT3B as catalytic subunits, and form-specific accessory subunits. STT3A complex assembly occurs through the formation of 3 subcomplexes. Subcomplex 1 contains RPN1 and TMEM258, subcomplex 2 contains the STT3A-specific subunits STT3A, DC2/OSTC, and KCP2 as well as the core subunit OST4, and subcomplex 3 contains RPN2, DAD1, and OST48. The STT3A complex can form stable complexes with the Sec61 complex or with both the Sec61 and TRAP complexes. Interacts with DDI2. Interacts with TMEM35A/NACHO. As to expression, expressed in all tissues tested.

The protein localises to the endoplasmic reticulum. It localises to the endoplasmic reticulum membrane. It participates in protein modification; protein glycosylation. In terms of biological role, subunit of the oligosaccharyl transferase (OST) complex that catalyzes the initial transfer of a defined glycan (Glc(3)Man(9)GlcNAc(2) in eukaryotes) from the lipid carrier dolichol-pyrophosphate to an asparagine residue within an Asn-X-Ser/Thr consensus motif in nascent polypeptide chains, the first step in protein N-glycosylation. N-glycosylation occurs cotranslationally and the complex associates with the Sec61 complex at the channel-forming translocon complex that mediates protein translocation across the endoplasmic reticulum (ER). All subunits are required for a maximal enzyme activity. The protein is Dolichyl-diphosphooligosaccharide--protein glycosyltransferase subunit 2 of Homo sapiens (Human).